The chain runs to 492 residues: Dipeptide permease D (492 aa).

The next 13 helical transmembrane spans lie at Val-14–Leu-34, Ala-49–Ala-69, Leu-91–Val-111, Gly-138–Cys-158, Trp-167–Cys-187, Asn-212–Trp-232, Ser-236–Leu-256, Leu-269–Ser-289, Met-312–Val-332, Ile-344–Leu-364, Leu-379–Met-399, Val-413–Ile-433, and Val-458–Leu-478.

Belongs to the major facilitator superfamily. Proton-dependent oligopeptide transporter (POT/PTR) (TC 2.A.17) family. DtpD subfamily.

It localises to the cell inner membrane. Functionally, probable proton-dependent permease that transports dipeptides. This is Dipeptide permease D from Klebsiella pneumoniae subsp. pneumoniae (strain ATCC 700721 / MGH 78578).